A 477-amino-acid chain; its full sequence is MYNRKDRDVHERKEDGQSEFEALNGTNAIMSDNSKAYSIKFLTFNTWGLKYVSKHRKERLRAIADKLAGHSMLTPISDELLPNGGDSNENEDYDVIALQEIWCVEDWKYLASACASKYPYQRLFHSGILTGPGLAILSKVPIESTFLYRFPINGRPSAVFRGDWYVGKSIAITVLNTGTRPIAIMNSHMHAPYAKQGDAAYLCHRSCQAWDFSRLIKLYRQAGYAVIVVGDLNSRPGSLPHKFLTQEAGLVDSWEQLHGKQDLAVIARLSPLQQLLKGCTTCDSLLNTWRAQRQPDEACRLDYALIDPDFLQTVDAGVRFTERIPHLDCSVSDHFAYSCTLNIVPQGTESRPSTSVKRAKTHDRELILQRYSNYETMIECIHTYLKTAQRQKFFRGLHFWASILLLIASLVVTTFTANKAGWSSIFWVLFAIAVSISGTIDGAISFLFGRSEIRALIEVEQEVLDAEHHLQTFLSEK.

The Cytoplasmic portion of the chain corresponds to 1 to 398; the sequence is MYNRKDRDVH…QRQKFFRGLH (398 aa). E100 contributes to the Mg(2+) binding site. The active-site Proton acceptor is the H334. Residues 399 to 417 traverse the membrane as a helical segment; that stretch reads FWASILLLIASLVVTTFTA. Residues 418–424 lie on the Mitochondrial intermembrane side of the membrane; it reads NKAGWSS. Residues 425–449 form a helical membrane-spanning segment; the sequence is IFWVLFAIAVSISGTIDGAISFLFG. At 450 to 477 the chain is on the cytoplasmic side; the sequence is RSEIRALIEVEQEVLDAEHHLQTFLSEK.

It belongs to the neutral sphingomyelinase family. Requires Mg(2+) as cofactor.

Its subcellular location is the endoplasmic reticulum membrane. It is found in the mitochondrion outer membrane. It carries out the reaction an N-acyl-(4R)-4-hydroxysphinganine-1-phosphoinositol + H2O = 1D-myo-inositol 1-phosphate + an N-acyl-(4R)-4-hydroxysphinganine + H(+). The enzyme catalyses a mannosylinositol-1-phospho-N-acyl-sphingoid base + H2O = mannosylinositol-1-phosphate + an N-acyl-sphingoid base + H(+). The catalysed reaction is an inositol phosphomannosylinositol-1-phospho-N-acyl-(4R)-4-hydroxysphinganine + H2O = mannosyldiinositol-1-phosphate + an N-acyl-(4R)-4-hydroxysphinganine + H(+). It functions in the pathway lipid metabolism; sphingolipid metabolism. With respect to regulation, activated through localization to mitochondria in specific growth phases. Functionally, responsible for the hydrolysis of the phosphosphingolipids (IPS), inositol phosphorylceramide (IPC), mannosylinositol phosphorylceramide (MIPC), and mannosyldiinositol phosphorylceramide (M(IP)2C). Regulates sphingolipid metabolism in mitochondria, especially the formation of alpha-hydroxylated very long chain phytoceramides. The generated ceramides contribute to the normal function of mitochondria. Also active on sphingomyelin (SM), but this activity is probably not physiologically relevant. This is Inositol phosphosphingolipids phospholipase C from Saccharomyces cerevisiae (strain ATCC 204508 / S288c) (Baker's yeast).